A 342-amino-acid polypeptide reads, in one-letter code: Prostasin (342 aa).

The N-terminal stretch at 1 to 29 (MAPRVGLGLGQLEAVTILLLLGLLQSGIR) is a signal peptide. Positions 30–32 (ADG) are cleaved as a propeptide — activation peptide. 2 disulfide bridges follow: Cys37/Cys154 and Cys70/Cys86. Residues 45-286 (ITGGGSAKPG…YASWIHHHVA (242 aa)) form the Peptidase S1 domain. Catalysis depends on His85, which acts as the Charge relay system. The N-linked (GlcNAc...) asparagine glycan is linked to Asn110. Asp134 (charge relay system) is an active-site residue. Asn159 carries an N-linked (GlcNAc...) asparagine glycan. 3 disulfides stabilise this stretch: Cys168–Cys244, Cys201–Cys223, and Cys234–Cys262. Ser238 (charge relay system) is an active-site residue. Residues 320-340 (LLRPVLFLPLGLTLGLLSLWL) form a helical membrane-spanning segment. Residues 323–342 (PVLFLPLGLTLGLLSLWLEH) constitute a propeptide that is removed on maturation.

This sequence belongs to the peptidase S1 family. Heterodimer of two chains, light and heavy, held by a disulfide bond.

It is found in the cell membrane. Its subcellular location is the secreted. It localises to the extracellular space. Possesses a trypsin-like cleavage specificity with a preference for poly-basic substrates. Stimulates epithelial sodium channel (ENaC) activity through activating cleavage of the gamma subunits (SCNN1G). This Mus musculus (Mouse) protein is Prostasin (Prss8).